A 145-amino-acid polypeptide reads, in one-letter code: ATP synthase epsilon chain (145 aa).

A disordered region spans residues 100–123 (RAQRAKQRAEDAIKTASEKHDSDE). Over residues 106–123 (QRAEDAIKTASEKHDSDE) the composition is skewed to basic and acidic residues.

The protein belongs to the ATPase epsilon chain family. In terms of assembly, F-type ATPases have 2 components, CF(1) - the catalytic core - and CF(0) - the membrane proton channel. CF(1) has five subunits: alpha(3), beta(3), gamma(1), delta(1), epsilon(1). CF(0) has three main subunits: a, b and c.

Its subcellular location is the cell membrane. Its function is as follows. Produces ATP from ADP in the presence of a proton gradient across the membrane. In Latilactobacillus sakei subsp. sakei (strain 23K) (Lactobacillus sakei subsp. sakei), this protein is ATP synthase epsilon chain.